Reading from the N-terminus, the 494-residue chain is MGTSGVRFLTLVKPFMFALPEVSSATKKIPVNEKLLWTSIVVFLYLVCCQIPLYGITNTKSSDPFYWMRVILASNKGTLMELGISPIVTSGLVMQLLAGSKIIDVDQGTKEDKTLFQGAQKLLGILITIGESVAYVLSGMYGDVKDLGAGNAILIIVQLFTSGIIVICLDELLQKGYGIGSAISLFIATNVCESIVWKSFSPTTINTGRGTEFEGALVALFQLMITKTDKVRALQEAFYRQNLPNVTNLLATVLVFVLVVYFQGFQVELPITPAKSKGMAGQFYPIKLFYTSNMPIILQTALVSNLYFISQILYKRYPENIIIHILGRWEEPEMSVSGQMRPVGGIAYYISPLNSFAEIVSDPVHALLYIIFILASCALFSKTWIQVSGTSASDVSKQLRDQQMVMKGFRASSMQRELNRYIPTAAAFGGMCIGALSIVADFMGAIGSGTGILLAVTTIYQSWETILLAVTTIYQSWETIRKESRDTDALKMFG.

Transmembrane regions (helical) follow at residues 36 to 56, 79 to 99, 122 to 142, 147 to 167, 177 to 197, 249 to 269, 294 to 314, 359 to 379, 426 to 446, and 450 to 470; these read LWTS…LYGI, LMEL…LLAG, LLGI…GMYG, LGAG…IIVI, YGIG…SIVW, LLAT…QVEL, MPII…QILY, IVSD…SCAL, AAFG…MGAI, and TGIL…LLAV.

Belongs to the SecY/SEC61-alpha family. Heterotrimeric complex composed of SEC61-alpha, SEC61-beta and SEC61-gamma.

It localises to the endoplasmic reticulum membrane. In terms of biological role, appears to play a crucial role in the insertion of secretory and membrane polypeptides into the ER. It is required for assembly of membrane and secretory proteins. This is Protein transport protein Sec61 subunit alpha from Pyrenomonas salina.